We begin with the raw amino-acid sequence, 1020 residues long: Retinoblastoma-related protein (1020 aa).

2 stretches are compositionally biased toward polar residues: residues 382 to 391 (SPTKTITSPL) and 398 to 409 (ASHTNGILGSTN). The interval 382–409 (SPTKTITSPLSPHRSPASHTNGILGSTN) is disordered. The tract at residues 415–616 (TPVSTAMTTA…EKGSSMYNSL (202 aa)) is domain A. A pocket region spans residues 415-869 (TPVSTAMTTA…NEIFIPAAKP (455 aa)). The segment at 617–737 (TVARPSLSAE…PGGGGETCAE (121 aa)) is spacer. The domain B stretch occupies residues 738–869 (TGINIFFSKI…NEIFIPAAKP (132 aa)).

The protein belongs to the retinoblastoma protein (RB) family.

It is found in the nucleus. Functionally, regulator of biological processes that recruits a histone deacetylase to control gene transcription. May play a role in the entry into mitosis, negatively regulating the cell proliferation. Formation of stable complexes with geminiviridae replication-associated proteins may create a cellular environment which favors viral DNA replication. The sequence is that of Retinoblastoma-related protein (RBR) from Ricinus communis (Castor bean).